A 319-amino-acid chain; its full sequence is DNA-directed RNA polymerases IV and V subunit 3B (319 aa).

M1 is modified (N-acetylmethionine).

The protein belongs to the archaeal Rpo3/eukaryotic RPB3 RNA polymerase subunit family. In terms of assembly, component of the RNA polymerase IV and V complexes. Interacts with NRPB11, SHH1, GRP23 and NRPD1.

Its subcellular location is the nucleus. In terms of biological role, DNA-dependent RNA polymerase catalyzes the transcription of DNA into RNA using the four ribonucleoside triphosphates as substrates. Component of RNA polymerases IV and V which mediate short-interfering RNAs (siRNA) accumulation and subsequent RNA-directed DNA methylation-dependent (RdDM) transcriptional gene silencing (TGS) of endogenous repeated sequences, including transposable elements. The sequence is that of DNA-directed RNA polymerases IV and V subunit 3B (NRPD3B) from Arabidopsis thaliana (Mouse-ear cress).